We begin with the raw amino-acid sequence, 215 residues long: Ribonuclease T (215 aa).

In terms of domain architecture, Exonuclease spans 20–194 (VVIDVETAGF…YDTERTAVLF (175 aa)). Residues Asp23, Glu25, His181, and Asp186 each coordinate Mg(2+). His181 (proton donor/acceptor) is an active-site residue.

This sequence belongs to the RNase T family. Homodimer. Requires Mg(2+) as cofactor.

Functionally, trims short 3' overhangs of a variety of RNA species, leaving a one or two nucleotide 3' overhang. Responsible for the end-turnover of tRNA: specifically removes the terminal AMP residue from uncharged tRNA (tRNA-C-C-A). Also appears to be involved in tRNA biosynthesis. This Citrobacter koseri (strain ATCC BAA-895 / CDC 4225-83 / SGSC4696) protein is Ribonuclease T.